The chain runs to 548 residues: Probable malate:quinone oxidoreductase (548 aa).

This sequence belongs to the MQO family. FAD is required as a cofactor.

It carries out the reaction (S)-malate + a quinone = a quinol + oxaloacetate. It participates in carbohydrate metabolism; tricarboxylic acid cycle; oxaloacetate from (S)-malate (quinone route): step 1/1. This Escherichia coli (strain SE11) protein is Probable malate:quinone oxidoreductase.